A 989-amino-acid polypeptide reads, in one-letter code: AP-2 complex subunit alpha-2 (989 aa).

HEAT repeat units follow at residues 112-149 (EMLP…KEVA), 188-225 (VTPD…ENPI), 368-402 (IMIK…MCDK), and 403-440 (NTCK…KFAS). The interval 610 to 745 (DNSNTTSNTA…SSSPISSGGS (136 aa)) is disordered. The segment covering 611–623 (NSNTTSNTANNSN) has biased composition (low complexity). Polar residues predominate over residues 624–638 (MINSQDSKISSGGFN). The segment covering 639–703 (QSPQPSQQQQ…QPVYQQQQQA (65 aa)) has biased composition (low complexity). Polar residues predominate over residues 704-714 (ESFSPVQSDTV). Over residues 715–745 (SSFGQQQQQQQGGFSSPTIQASSSPISSGGS) the composition is skewed to low complexity.

Belongs to the adaptor complexes large subunit family. Adaptor protein complex 2 (AP-2) is a heterotetramer composed of two large adaptins (alpha-type and beta-type subunits), a medium adaptin (mu-type subunit AP50) and a small adaptin (sigma-type subunit AP17).

It is found in the cell membrane. Its subcellular location is the membrane. It localises to the coated pit. Its function is as follows. Component of the adaptor complexes which link clathrin to receptors in coated vesicles. Clathrin-associated protein complexes are believed to interact with the cytoplasmic tails of membrane proteins, leading to their selection and concentration. The protein is AP-2 complex subunit alpha-2 (ap2a1-1) of Dictyostelium discoideum (Social amoeba).